The sequence spans 227 residues: Orotidine 5'-phosphate decarboxylase (227 aa).

Residues aspartate 8, lysine 30, 59–68, threonine 118, arginine 178, glutamine 187, glycine 207, and arginine 208 each bind substrate; that span reads DLKLYDIPYT. Catalysis depends on lysine 61, which acts as the Proton donor.

The protein belongs to the OMP decarboxylase family. Type 1 subfamily. In terms of assembly, homodimer.

The catalysed reaction is orotidine 5'-phosphate + H(+) = UMP + CO2. It participates in pyrimidine metabolism; UMP biosynthesis via de novo pathway; UMP from orotate: step 2/2. In terms of biological role, catalyzes the decarboxylation of orotidine 5'-monophosphate (OMP) to uridine 5'-monophosphate (UMP). The chain is Orotidine 5'-phosphate decarboxylase from Helicobacter pylori (strain Shi470).